Consider the following 339-residue polypeptide: DNA-directed RNA polymerase subunit alpha (339 aa).

Residues 1–233 (MVREEVAGST…DLFLPFLHAE (233 aa)) are alpha N-terminal domain (alpha-NTD). Residues 266–339 (GIPLNCIFID…MDLLKNKLSF (74 aa)) form an alpha C-terminal domain (alpha-CTD) region.

The protein belongs to the RNA polymerase alpha chain family. In plastids the minimal PEP RNA polymerase catalytic core is composed of four subunits: alpha, beta, beta', and beta''. When a (nuclear-encoded) sigma factor is associated with the core the holoenzyme is formed, which can initiate transcription.

It localises to the plastid. Its subcellular location is the chloroplast. It carries out the reaction RNA(n) + a ribonucleoside 5'-triphosphate = RNA(n+1) + diphosphate. Its function is as follows. DNA-dependent RNA polymerase catalyzes the transcription of DNA into RNA using the four ribonucleoside triphosphates as substrates. This is DNA-directed RNA polymerase subunit alpha from Agrostis stolonifera (Creeping bentgrass).